The chain runs to 1013 residues: Tolloid-like protein 1 (1013 aa).

The signal sequence occupies residues 1-30; the sequence is MGLQALSPRMLLWLVVSGIVFSRVLWVCAG. The propeptide occupies 31-147; sequence LDYDYTFDGN…EQSEKNRVPR (117 aa). The segment at 124 to 150 is disordered; the sequence is QNNTMKGKAPPKLSEQSEKNRVPRAAT. The Peptidase M12A domain occupies 148-347; it reads AATSRTERIW…AQARKLYRCP (200 aa). N169 carries an N-linked (GlcNAc...) asparagine glycan. Disulfide bonds link C190-C346, C210-C232, C212-C213, and C349-C375. Position 240 (H240) interacts with Zn(2+). Residue E241 is part of the active site. Zn(2+) is bound by residues H244 and H250. 2 CUB domains span residues 349-461 and 462-574; these read CGET…YEAI and CGGE…FFKE. N-linked (GlcNAc...) asparagine glycosylation is found at N359 and N390. Intrachain disulfides connect C402–C424, C462–C488, C515–C537, C578–C590, C586–C599, C601–C614, C618–C644, C671–C693, C734–C745, C741–C754, C756–C769, C774–C800, C827–C849, C887–C917, and C944–C966. The 42-residue stretch at 574-615 folds into the EGF-like 1; calcium-binding domain; it reads EEDECAKPDRGGCEQRCLNTLGSYQCACEPGYELGPDRRSCE. The region spanning 618 to 730 is the CUB 3 domain; the sequence is CGGLLTKLNG…KGFKAHFFSD (113 aa). N-linked (GlcNAc...) asparagine glycosylation occurs at N626. The EGF-like 2; calcium-binding domain maps to 730–770; the sequence is DKDECSKDNGGCQHECVNTMGSYTCQCRNGFVLHENKHDCK. CUB domains follow at residues 774 to 886 and 887 to 1003; these read CEQK…HSTE and CGGR…YKSI.

Zn(2+) serves as cofactor. In terms of tissue distribution, highly expressed in brain and kidney and weakly in lung, skeletal muscle. A perceptible level of expression is observed in heart and testis.

The protein localises to the secreted. Functionally, protease which processes procollagen C-propeptides, such as chordin, pro-biglycan and pro-lysyl oxidase. Required for the embryonic development, especially heart development. Predominant protease, which in the development, influences dorsal-ventral patterning and skeletogenesis. The polypeptide is Tolloid-like protein 1 (Tll1) (Mus musculus (Mouse)).